A 144-amino-acid chain; its full sequence is Glycine-rich protein HC1 (144 aa).

A helical transmembrane segment spans residues 5–25; sequence IFLLLGLSIAFAILISSEVAA. 11 tandem repeats follow at residues 37–42, 43–48, 50–55, 56–61, 63–68, 69–74, 76–81, 82–87, 89–94, 102–107, and 108–113. Residues 37-113 are 11 X 6 AA tandem repeats of G-Y-[NH]-N-G -G; the sequence is GYNNGGGYHN…NNGGGYHGGG (77 aa).

It belongs to the GRP family.

It localises to the membrane. The chain is Glycine-rich protein HC1 from Oxybasis rubra (Red goosefoot).